The sequence spans 482 residues: Pancreatic lipase-related protein 2 (482 aa).

Residues M1–G30 form the signal peptide. C34 and C40 form a disulfide bridge. N92 is a glycosylation site (N-linked (GlcNAc...) asparagine). The tract at residues I106–L118 is required for galactolipase activity. A disulfide bridge links C122 with C133. S184 acts as the Nucleophile in catalysis. The active-site Charge relay system is D208. Residues E219, R222, D224, and D227 each contribute to the Ca(2+) site. An intrachain disulfide couples C269 to C293. The tract at residues Q270 to A292 is required for galactolipase activity. H295 serves as the catalytic Charge relay system. Cystine bridges form between C317-C328 and C331-C336. N366 and N441 each carry an N-linked (GlcNAc...) asparagine glycan. The 113-residue stretch at W370–C482 folds into the PLAT domain. A disulfide bond links C466 and C482.

The protein belongs to the AB hydrolase superfamily. Lipase family. As to expression, expressed in acinar cells of pancreas (at protein level).

The protein resides in the secreted. The protein localises to the zymogen granule membrane. It is found in the cell projection. It localises to the neuron projection. The catalysed reaction is a triacylglycerol + H2O = a diacylglycerol + a fatty acid + H(+). The enzyme catalyses a 1,2-diacyl-3-O-(beta-D-galactosyl)-sn-glycerol + 2 H2O = 3-beta-D-galactosyl-sn-glycerol + 2 a fatty acid + 2 H(+). It catalyses the reaction 1,2,3-tri-(9Z-octadecenoyl)-glycerol + H2O = di-(9Z)-octadecenoylglycerol + (9Z)-octadecenoate + H(+). It carries out the reaction di-(9Z)-octadecenoylglycerol + H2O = (9Z-octadecenoyl)-glycerol + (9Z)-octadecenoate + H(+). The catalysed reaction is (9Z-octadecenoyl)-glycerol + H2O = glycerol + (9Z)-octadecenoate + H(+). The enzyme catalyses 1-(9Z-octadecenoyl)-glycerol + H2O = glycerol + (9Z)-octadecenoate + H(+). It catalyses the reaction 1,2,3-tripropanoylglycerol + H2O = dipropanoylglycerol + propanoate + H(+). It carries out the reaction 1,2,3-tributanoylglycerol + H2O = dibutanoylglycerol + butanoate + H(+). The catalysed reaction is 1,2,3-trioctanoylglycerol + H2O = dioctanoylglycerol + octanoate + H(+). The enzyme catalyses 1,2-didecanoylglycerol + H2O = decanoylglycerol + decanoate + H(+). It catalyses the reaction long chain 1,2-diacyl-3-O-beta-D-galactosyl-sn-glycerol + H2O = long chain acyl-3-O-beta-D-galactosyl-sn-glycerol + a fatty acid + H(+). It carries out the reaction 1,2-dioctanoyl-3-O-beta-D-galactosyl-sn-glycerol + H2O = octanoyl-3-(beta-D-galactosyl)-sn-glycerol + octanoate + H(+). The catalysed reaction is 1,2-didodecanoyl-3-beta-D-galactosyl-sn-glycerol + H2O = dodecanoyl-3-beta-D-galactosyl-sn-glycerol + dodecanoate + H(+). The enzyme catalyses 1-beta-D-galactosyl-2,3-didodecanoyl-sn-glycerol + H2O = 1-beta-D-galactosyl-dodecanoyl-sn-glycerol + dodecanoate + H(+). It catalyses the reaction a 1,2-diacyl-3-O-[alpha-D-galactosyl-(1-&gt;6)-beta-D-galactosyl]-sn-glycerol + H2O = acyl-3-O-[alpha-D-galactosyl-(1-&gt;6)-beta-D-galactosyl]-sn-glycerol + a fatty acid + H(+). It carries out the reaction long chain 1,2-diacyl-3-O-[alpha-D-galactosyl-(1-&gt;6)-beta-D-galactosyl]-sn-glycerol + H2O = long chain acyl-3-O-[alpha-D-galactosyl-(1-&gt;6)-beta-D-galactosyl]-sn-glycerol + a fatty acid + H(+). The catalysed reaction is 1,2-dioctanoyl-3-O-[alpha-D-galactosyl-(1-&gt;6)-beta-D-galactosyl]-sn-glycerol + H2O = octanoyl-3-O-[alpha-D-galactosyl-(1-&gt;6)-beta-D-galactosyl]-sn-glycerol + octanoate + H(+). The enzyme catalyses 1,2-didodecanoyl-3-O-[alpha-D-galactosyl-(1-&gt;6)-beta-D-galactosyl]-sn-glycerol + H2O = dodecanoyl-3-O-[alpha-D-galactosyl-(1-&gt;6)-beta-D-galactosyl]-sn-glycerol + dodecanoate + H(+). It catalyses the reaction a 1,2-diacyl-sn-glycero-3-phosphocholine + H2O = a monoacyl-sn-glycero-3-phosphocholine + a fatty acid + H(+). It participates in glycerolipid metabolism; triacylglycerol degradation. It functions in the pathway glycolipid metabolism. With respect to regulation, CLPS stimulates triacylglycerol lipase activity. Triacylglycerol lipase activity is not inhibited by increasing bile salt concentration. In terms of biological role, lipase that primarily hydrolyzes triglycerides and galactosylglycerides. In neonates, may play a major role in pancreatic digestion of dietary fats such as milk fat globules enriched in long-chain triglycerides. Hydrolyzes short-, medium- and long-chain fatty acyls in triglycerides without apparent positional specificity. Can completely deacylate triacylglycerols. When the liver matures and bile salt synthesis increases, likely functions mainly as a galactolipase and monoacylglycerol lipase. Hydrolyzes monogalactosyldiglycerols (MGDG) and digalactosyldiacylglycerols (DGDG) present in a plant-based diet, releasing long-chain polyunsaturated fatty acids. Hydrolyzes medium- and long-chain fatty acyls in galactolipids. May act together with LIPF to hydrolyze partially digested triglycerides. Hydrolyzes long-chain monoglycerides with high efficiency. In cytotoxic T cells, contributes to perforin-dependent cell lysis, but is unlikely to mediate direct cytotoxicity. Also has low phospholipase activity. In neurons, required for the localization of the phospholipid 1-oleoyl-2-palmitoyl-PC (OPPC) to neurite tips through acyl chain remodeling of membrane phospholipids. The resulting OPPC-rich lipid membrane domain recruits the t-SNARE protein STX4 by selectively interacting with the STX4 transmembrane domain and this promotes surface expression of the dopamine transporter SLC6A3/DAT at neurite tips by facilitating fusion of SLC6A3-containing transport vesicles with the plasma membrane. The protein is Pancreatic lipase-related protein 2 of Mus musculus (Mouse).